The following is a 368-amino-acid chain: Proteinase-activated receptor 3 (368 aa).

Positions 1–21 (MEMKVLILVGVRLLFLPTTVC) are cleaved as a signal peptide. A propeptide spans 22-37 (QSGMKHVSDNSALTAE) (removed for receptor activation). Residues 38–93 (SFNGNEHSFEEFPLSDIEGWTGATTTIKAKCPEESITTLHVNNATMGYLRSSLSTK) lie on the Extracellular side of the membrane. Asparagine 80 is a glycosylation site (N-linked (GlcNAc...) asparagine). Residues 94–114 (VIPAIYILVFVIGVPANIVTL) traverse the membrane as a helical segment. At 115 to 123 (WKLSSRTKS) the chain is on the cytoplasmic side. The helical transmembrane segment at 124–144 (ICLVIFHTNLAIADLLFCVTL) threads the bilayer. The Extracellular portion of the chain corresponds to 145–166 (PFKIAYHLNGNDWVFGEVMCRV). Cysteine 164 and cysteine 243 are joined by a disulfide. The helical transmembrane segment at 167 to 187 (TTVAFYGNMYCAILILTCMGI) threads the bilayer. The Cytoplasmic segment spans residues 188–208 (NRYLATVHPFTYRKLPKRNFT). A helical membrane pass occupies residues 209 to 229 (LLMCGVVWVMVVLYMLPLAIL). The Extracellular portion of the chain corresponds to 230–257 (KQEYHLVQPGITTCHDVHDTCESPLPFQ). Residues 258–278 (FYYFVSLAFFGFLIPFVVSVF) form a helical membrane-spanning segment. Residues 279–300 (CYTTLIHKLNAQDRKWLRYIKA) are Cytoplasmic-facing. The helical transmembrane segment at 301–321 (VLLILVIFTICFAPTNIILII) threads the bilayer. Over 322–338 (HHANYYYSNTDSLYFMY) the chain is Extracellular. Residues 339-359 (LIALCLGSLNSCLDPFLYFIM) traverse the membrane as a helical segment. The Cytoplasmic segment spans residues 360–368 (SKIVDQLTS).

Belongs to the G-protein coupled receptor 1 family. As to quaternary structure, interacts with INSC/inscuteable and GPSM2. In terms of processing, a proteolytic cleavage generates a new N-terminus that functions as a tethered ligand.

The protein resides in the cell membrane. In terms of biological role, receptor for activated thrombin coupled to G proteins that stimulate phosphoinositide hydrolysis. This Rattus norvegicus (Rat) protein is Proteinase-activated receptor 3 (F2rl2).